The chain runs to 227 residues: Translation initiation factor 6 (227 aa).

It belongs to the eIF-6 family.

Binds to the 50S ribosomal subunit and prevents its association with the 30S ribosomal subunit to form the 70S initiation complex. The protein is Translation initiation factor 6 of Methanococcus maripaludis (strain DSM 14266 / JCM 13030 / NBRC 101832 / S2 / LL).